The following is a 709-amino-acid chain: Polyribonucleotide nucleotidyltransferase (709 aa).

Residues Asp-485 and Asp-491 each contribute to the Mg(2+) site. The KH domain maps to 552-611 (PRIYTMKIDPKKIKDVIGKGGATIRSLTEETGTSIDIDDDGTVKIAAVDSNAAKNVMGRI). An S1 motif domain is found at 621 to 689 (GAIYKGKVTR…RQGRIRLTMK (69 aa)).

This sequence belongs to the polyribonucleotide nucleotidyltransferase family. As to quaternary structure, component of the RNA degradosome, which is a multiprotein complex involved in RNA processing and mRNA degradation. It depends on Mg(2+) as a cofactor.

The protein resides in the cytoplasm. It carries out the reaction RNA(n+1) + phosphate = RNA(n) + a ribonucleoside 5'-diphosphate. Involved in mRNA degradation. Catalyzes the phosphorolysis of single-stranded polyribonucleotides processively in the 3'- to 5'-direction. In Haemophilus influenzae (strain PittGG), this protein is Polyribonucleotide nucleotidyltransferase.